A 289-amino-acid chain; its full sequence is F-actin-capping protein subunit beta (289 aa).

A disordered region spans residues 73 to 110 (RSPWSNQFDPPLEGGNQGGSGGDGEGDGGEGGAAGSIM). Positions 87–106 (GNQGGSGGDGEGDGGEGGAA) are enriched in gly residues.

The protein belongs to the F-actin-capping protein beta subunit family. In terms of assembly, component of the F-actin capping complex, composed of a heterodimer of an alpha and a beta subunit.

It localises to the cytoplasm. The protein resides in the cytoskeleton. The protein localises to the actin patch. Functionally, F-actin-capping proteins bind in a Ca(2+)-independent manner to the fast growing ends of actin filaments (barbed end) thereby blocking the exchange of subunits at these ends. Unlike other capping proteins (such as gelsolin and severin), these proteins do not sever actin filaments. This chain is F-actin-capping protein subunit beta (fac-2), found in Neurospora crassa (strain ATCC 24698 / 74-OR23-1A / CBS 708.71 / DSM 1257 / FGSC 987).